Here is a 230-residue protein sequence, read N- to C-terminus: Heptaprenylglyceryl phosphate synthase (230 aa).

Lys-12 serves as a coordination point for sn-glycerol 1-phosphate. 2 residues coordinate Mg(2+): Asp-14 and Ser-40. Sn-glycerol 1-phosphate contacts are provided by residues 159–164 (YLEYSG), Gly-189, and 209–210 (GN).

This sequence belongs to the GGGP/HepGP synthase family. Group I subfamily. In terms of assembly, homodimer. The cofactor is Mg(2+).

The catalysed reaction is sn-glycerol 1-phosphate + all-trans-heptaprenyl diphosphate = 3-heptaprenyl-sn-glycero-1-phosphate + diphosphate. Its pathway is membrane lipid metabolism; glycerophospholipid metabolism. Its function is as follows. Prenyltransferase that catalyzes in vivo the transfer of the heptaprenyl moiety of heptaprenyl pyrophosphate (HepPP; 35 carbon atoms) to the C3 hydroxyl of sn-glycerol-1-phosphate (G1P), producing heptaprenylglyceryl phosphate (HepGP). This reaction is an ether-bond-formation step in the biosynthesis of archaea-type G1P-based membrane lipids found in Bacillales. In Bacillus pumilus (strain SAFR-032), this protein is Heptaprenylglyceryl phosphate synthase.